A 701-amino-acid chain; its full sequence is Elongation factor G 2 (701 aa).

Positions 8-291 (ERYRNIGISA…AVIDYLPSPA (284 aa)) constitute a tr-type G domain. GTP is bound by residues 17–24 (AHIDAGKT), 88–92 (DTPGH), and 142–145 (NKMD).

It belongs to the TRAFAC class translation factor GTPase superfamily. Classic translation factor GTPase family. EF-G/EF-2 subfamily.

It is found in the cytoplasm. In terms of biological role, catalyzes the GTP-dependent ribosomal translocation step during translation elongation. During this step, the ribosome changes from the pre-translocational (PRE) to the post-translocational (POST) state as the newly formed A-site-bound peptidyl-tRNA and P-site-bound deacylated tRNA move to the P and E sites, respectively. Catalyzes the coordinated movement of the two tRNA molecules, the mRNA and conformational changes in the ribosome. This is Elongation factor G 2 from Burkholderia lata (strain ATCC 17760 / DSM 23089 / LMG 22485 / NCIMB 9086 / R18194 / 383).